The following is a 222-amino-acid chain: dTTP/UTP pyrophosphatase (222 aa).

D83 acts as the Proton acceptor in catalysis.

The protein belongs to the Maf family. YhdE subfamily. A divalent metal cation serves as cofactor.

It localises to the cytoplasm. The catalysed reaction is dTTP + H2O = dTMP + diphosphate + H(+). It catalyses the reaction UTP + H2O = UMP + diphosphate + H(+). Its function is as follows. Nucleoside triphosphate pyrophosphatase that hydrolyzes dTTP and UTP. May have a dual role in cell division arrest and in preventing the incorporation of modified nucleotides into cellular nucleic acids. The protein is dTTP/UTP pyrophosphatase of Desulfitobacterium hafniense (strain Y51).